A 481-amino-acid polypeptide reads, in one-letter code: UDP-N-acetylmuramoylalanine--D-glutamate ligase (481 aa).

108-114 (GTNGKTS) lines the ATP pocket.

It belongs to the MurCDEF family.

The protein localises to the cytoplasm. The catalysed reaction is UDP-N-acetyl-alpha-D-muramoyl-L-alanine + D-glutamate + ATP = UDP-N-acetyl-alpha-D-muramoyl-L-alanyl-D-glutamate + ADP + phosphate + H(+). It participates in cell wall biogenesis; peptidoglycan biosynthesis. Its function is as follows. Cell wall formation. Catalyzes the addition of glutamate to the nucleotide precursor UDP-N-acetylmuramoyl-L-alanine (UMA). This chain is UDP-N-acetylmuramoylalanine--D-glutamate ligase, found in Bifidobacterium longum (strain DJO10A).